Here is a 101-residue protein sequence, read N- to C-terminus: NADH-quinone oxidoreductase subunit K (101 aa).

Helical transmembrane passes span Leu4–Leu24, Ile30–Phe50, and Phe62–Val82.

Belongs to the complex I subunit 4L family. As to quaternary structure, NDH-1 is composed of 14 different subunits. Subunits NuoA, H, J, K, L, M, N constitute the membrane sector of the complex.

The protein resides in the cell inner membrane. It catalyses the reaction a quinone + NADH + 5 H(+)(in) = a quinol + NAD(+) + 4 H(+)(out). NDH-1 shuttles electrons from NADH, via FMN and iron-sulfur (Fe-S) centers, to quinones in the respiratory chain. The immediate electron acceptor for the enzyme in this species is believed to be ubiquinone. Couples the redox reaction to proton translocation (for every two electrons transferred, four hydrogen ions are translocated across the cytoplasmic membrane), and thus conserves the redox energy in a proton gradient. This chain is NADH-quinone oxidoreductase subunit K, found in Xylella fastidiosa (strain 9a5c).